Reading from the N-terminus, the 254-residue chain is uncharacterized protein (254 aa).

Val-7 and Asn-85 together coordinate NADP(+). Catalysis depends on Ser-136, which acts as the Proton donor. Positions 150, 154, 181, and 183 each coordinate NADP(+). Tyr-150 (proton acceptor) is an active-site residue. Catalysis depends on Lys-154, which acts as the Lowers pKa of active site Tyr.

This sequence belongs to the short-chain dehydrogenases/reductases (SDR) family.

This is an uncharacterized protein from Saccharomyces cerevisiae (strain ATCC 204508 / S288c) (Baker's yeast).